The following is a 216-amino-acid chain: 3-isopropylmalate dehydratase small subunit (216 aa).

Belongs to the LeuD family. LeuD type 1 subfamily. Heterodimer of LeuC and LeuD.

It catalyses the reaction (2R,3S)-3-isopropylmalate = (2S)-2-isopropylmalate. It functions in the pathway amino-acid biosynthesis; L-leucine biosynthesis; L-leucine from 3-methyl-2-oxobutanoate: step 2/4. Catalyzes the isomerization between 2-isopropylmalate and 3-isopropylmalate, via the formation of 2-isopropylmaleate. This Burkholderia mallei (strain NCTC 10247) protein is 3-isopropylmalate dehydratase small subunit.